We begin with the raw amino-acid sequence, 185 residues long: p53 apoptosis effector related to PMP-22 (185 aa).

4 consecutive transmembrane segments (helical) span residues 13 to 33, 74 to 94, 105 to 125, and 143 to 163; these read WILPMLLLFAIIFDIIAIAAQ, VAALMIIGLIILIFAFIISLV, LPFIGLLLILAVIVQIIALII, and WAYGFGWGATILTLGCAILFC.

Belongs to the TMEM47 family.

It is found in the cell junction. The protein resides in the desmosome. Its subcellular location is the cell membrane. The protein localises to the cytoplasm. Functionally, component of intercellular desmosome junctions. Positively regulates apoptosis in the early-stage embryo in response to UV irradiation, this is partially dependent on tp53 activation. Required for the survival of cell populations in the developing notochord and skin, therefore required for normal embryogenesis beyond 30 hpf. Acts as a positive regulator of endothelial cell apoptosis in response to blood flow-derived shear stress. This Danio rerio (Zebrafish) protein is p53 apoptosis effector related to PMP-22.